The primary structure comprises 237 residues: N-alpha-acetyltransferase 40 (237 aa).

A lipid anchor (N-myristoyl glycine) is attached at Gly-2. Residues 63 to 216 enclose the N-acetyltransferase domain; that stretch reads SGLEPATVDW…EDCSYEILSR (154 aa). Substrate-binding positions include Tyr-85, 127–129, and Tyr-138; that span reads DVE. Residues 140 to 142 and 148 to 153 each bind acetyl-CoA; these read VQL and RKGLGK. Thr-174 lines the substrate pocket. Asn-179 is an acetyl-CoA binding site. Residues Ser-197 and Tyr-211 each contribute to the substrate site.

The protein belongs to the acetyltransferase family. NAA40 subfamily.

Its subcellular location is the cytoplasm. The protein resides in the nucleus. The enzyme catalyses N-terminal L-seryl-[histone H4] + acetyl-CoA = N-terminal N(alpha)-acetyl-L-seryl-[histone H4] + CoA + H(+). It carries out the reaction N-terminal L-seryl-[histone H2A] + acetyl-CoA = N-terminal N(alpha)-acetyl-L-seryl-[histone H2A] + CoA + H(+). N-alpha-acetyltransferase that specifically mediates the acetylation of the N-terminal residues of histones H4 and H2A. In contrast to other N-alpha-acetyltransferase, has a very specific selectivity for histones H4 and H2A N-terminus and specifically recognizes the 'Ser-Gly-Arg-Gly sequence'. Acts as a negative regulator of apoptosis. May play a role in hepatic lipid metabolism. The sequence is that of N-alpha-acetyltransferase 40 from Mus musculus (Mouse).